The primary structure comprises 925 residues: Coronin-7 (925 aa).

4 WD repeats span residues Cys75–Pro115, Pro124–Glu163, Ala166–Gln205, and Ala209–Ala253. The segment at Val419–Arg461 is disordered. Residues Ser429–Leu460 show a composition bias toward low complexity. Phosphoserine is present on residues Ser462 and Ser465. Lys472 is covalently cross-linked (Glycyl lysine isopeptide (Lys-Gly) (interchain with G-Cter in ubiquitin)). WD repeat units lie at residues Gln542–Val582, Gly592–Lys632, and Gly635–Gln674. Residue Lys680 forms a Glycyl lysine isopeptide (Lys-Gly) (interchain with G-Cter in ubiquitin) linkage. The WD 8 repeat unit spans residues Asp728–Leu768. Positions Gln858 to Asp925 are disordered. A compositionally biased stretch (low complexity) spans Ser866–Gln882. Residues Leu884–Leu896 are compositionally biased toward basic and acidic residues. A Phosphoserine modification is found at Ser915.

This sequence belongs to the WD repeat coronin family. As to quaternary structure, interacts with clathrin adapter AP1 complex. This interaction takes place at Golgi membranes and not AP1-positive endosomal membranes. Interacts (when ubiquitinated at Lys-472) with EPS15. Post-translationally, the membrane-associated form is phosphorylated on tyrosine residues. Ubiquitinated via 'Lys-33'-linked ubiquitin chains by the BCR(KLHL20) E3 ubiquitin ligase complex: 'Lys-33'-linked ubiquitination promotes interaction with EPS15 and facilitates actin polymerization at the trans-Golgi network, thereby facilitating post-Golgi trafficking. Deubiquitinated by ZRANB1/TRABID. Widely expressed. Expressed in the spleen, peripheral leukocytes, testes, brain, thymus and small intestine.

It is found in the golgi apparatus membrane. The protein localises to the golgi apparatus. It localises to the trans-Golgi network. Its subcellular location is the cytoplasmic vesicle. The protein resides in the cytoplasm. It is found in the cytosol. Its function is as follows. F-actin regulator involved in anterograde Golgi to endosome transport: upon ubiquitination via 'Lys-33'-linked ubiquitin chains by the BCR(KLHL20) E3 ubiquitin ligase complex, interacts with EPS15 and localizes to the trans-Golgi network, where it promotes actin polymerization, thereby facilitating post-Golgi trafficking. May play a role in the maintenance of the Golgi apparatus morphology. In Homo sapiens (Human), this protein is Coronin-7 (CORO7).